Here is a 1104-residue protein sequence, read N- to C-terminus: Receptor-type guanylate cyclase gcy-15 (1104 aa).

At 1-431 the chain is on the extracellular side; that stretch reads MEIAINRLNA…ENCGPPANNT (431 aa). N43, N237, N263, N287, N407, and N429 each carry an N-linked (GlcNAc...) asparagine glycan. A helical membrane pass occupies residues 432–452; it reads FIIVISVGVAVLIGLAIAAAF. At 453–1104 the chain is on the cytoplasmic side; it reads LYKRYRYERR…QIQEKTYEFS (652 aa). The region spanning 528 to 823 is the Protein kinase domain; that stretch reads FNTGSTARAG…QIKRKLKPLT (296 aa). ATP is bound by residues 534-542 and K576; that span reads ARAGPFGPI. A coiled-coil region spans residues 838-871; sequence IEKYTDKLEKDIAERNEELEAEKAKSEALLKMML. One can recognise a Guanylate cyclase domain in the interval 894–1024; it reads TVFFSDCPGF…DTVNTASRME (131 aa).

This sequence belongs to the adenylyl cyclase class-4/guanylyl cyclase family. As to expression, expressed bilaterally in ASG sensory neurons.

Its subcellular location is the cell membrane. The catalysed reaction is GTP = 3',5'-cyclic GMP + diphosphate. Functionally, guanylate cyclase involved in the production of the second messenger cGMP. In Caenorhabditis elegans, this protein is Receptor-type guanylate cyclase gcy-15.